We begin with the raw amino-acid sequence, 288 residues long: Protease HtpX homolog (288 aa).

The next 2 helical transmembrane spans lie at 1-21 (MHTI…LLAG) and 23-43 (IIGG…MNFF). H130 serves as a coordination point for Zn(2+). The active site involves E131. Position 134 (H134) interacts with Zn(2+). Helical transmembrane passes span 140–160 (ILIS…AEMA) and 175–195 (IGGL…AMII). Residue E204 participates in Zn(2+) binding.

The protein belongs to the peptidase M48B family. Zn(2+) is required as a cofactor.

The protein localises to the cell inner membrane. The chain is Protease HtpX homolog from Persephonella marina (strain DSM 14350 / EX-H1).